Here is a 193-residue protein sequence, read N- to C-terminus: Thymidine kinase (193 aa).

ATP contacts are provided by residues 14-21 and 87-90; these read GCMFSGKT and DELH. The active-site Proton acceptor is Glu88. Zn(2+) contacts are provided by Cys147, Cys150, Cys185, and Cys188.

The protein belongs to the thymidine kinase family. Homotetramer.

Its subcellular location is the cytoplasm. The enzyme catalyses thymidine + ATP = dTMP + ADP + H(+). The protein is Thymidine kinase of Roseiflexus sp. (strain RS-1).